A 518-amino-acid chain; its full sequence is Glutamate--cysteine ligase (518 aa).

Belongs to the glutamate--cysteine ligase type 1 family. Type 1 subfamily.

The catalysed reaction is L-cysteine + L-glutamate + ATP = gamma-L-glutamyl-L-cysteine + ADP + phosphate + H(+). It participates in sulfur metabolism; glutathione biosynthesis; glutathione from L-cysteine and L-glutamate: step 1/2. The protein is Glutamate--cysteine ligase of Shigella boydii serotype 18 (strain CDC 3083-94 / BS512).